The primary structure comprises 475 residues: Argininosuccinate lyase (475 aa).

This sequence belongs to the lyase 1 family. Argininosuccinate lyase subfamily.

The protein resides in the cytoplasm. It catalyses the reaction 2-(N(omega)-L-arginino)succinate = fumarate + L-arginine. Its pathway is amino-acid biosynthesis; L-arginine biosynthesis; L-arginine from L-ornithine and carbamoyl phosphate: step 3/3. The protein is Argininosuccinate lyase of Streptomyces griseus subsp. griseus (strain JCM 4626 / CBS 651.72 / NBRC 13350 / KCC S-0626 / ISP 5235).